The following is a 216-amino-acid chain: Small ribosomal subunit protein uS3 (216 aa).

Residues 24 to 93 (IKEFLEYRLA…NPQIDVIDVS (70 aa)) enclose the KH type-2 domain.

It belongs to the universal ribosomal protein uS3 family. Part of the 30S ribosomal subunit.

Functionally, binds the lower part of the 30S subunit head. The polypeptide is Small ribosomal subunit protein uS3 (Pyrobaculum calidifontis (strain DSM 21063 / JCM 11548 / VA1)).